The chain runs to 340 residues: MAPANNPKGLGFQKWSAFWLWAIIGGYFAAFNIWNMRKLDFEGSFQVNSLPGEYAWMKRTAGFVSRASRMRFAWVPVQLLFMISTDFITSACSVIALLQFVPQLRKKYMSIHRMLGEAFFVMMGFGAPSGIMVAVHAFGAAENPSVRLSIMLTGVLTICFLATSFLCITTNGTLSRLRLKLHGASNPDAQDLQKYRAIDIRRHREFILRTLAVMSTGSFSSVYLIIPEVMNWTLGYVAFSCGTLVEDLGLGASYLRSAYPACMVENGGHAGTIVAVKADLSGSEEELTAWGRAGIGMAFWGALVLHMVLAEIYVSALTAVCLLLRYVGLILWLQIRVKSR.

Helical transmembrane passes span 15–35 (WSAF…NIWN), 81–101 (FMIS…LQFV), 118–138 (AFFV…VHAF), and 148–168 (LSIM…FLCI). Asn171 is a glycosylation site (N-linked (GlcNAc...) asparagine). 2 helical membrane-spanning segments follow: residues 219–239 (FSSV…YVAF) and 315–335 (SALT…WLQI).

It localises to the membrane. It participates in secondary metabolite biosynthesis. Its function is as follows. Part of the cluster that mediates the biosynthesis of a highly modified cyclo-arginine-tryptophan dipeptide (cRW). The first step of the pathway is perfornmed by the arginine-containing cyclodipeptide synthase (RCPDS) avaA that acts as the scaffold-generating enzyme and is responsible for formation of the cyclo-Arg-Trp (cRW) diketopiperazine. AvaB then acts as a multifunctional flavoenzyme that is responsible for generating the cyclo-Arg-formylkynurenine DKP, which can be deformylated by avaC. AvaB then further catalyzes an additional N-oxidation followed by cyclization and dehydration. The next step is an N-acetylation of the guanidine group catalyzed by the arginine N-acetyltransferase avaD. The roles of the additional enzymes identified within the ava cluster still have to be determined. The chain is Ava biosynthesis cluster protein G from Aspergillus versicolor.